The primary structure comprises 241 residues: Small ribosomal subunit protein uS2 (241 aa).

This sequence belongs to the universal ribosomal protein uS2 family.

In Cronobacter sakazakii (strain ATCC BAA-894) (Enterobacter sakazakii), this protein is Small ribosomal subunit protein uS2.